We begin with the raw amino-acid sequence, 579 residues long: Vitamin B6 transporter TPN1 (579 aa).

Helical transmembrane passes span 99-119, 123-143, 158-178, 199-219, 222-242, 275-295, 303-323, 363-383, 395-415, 422-442, 520-540, and 546-566; these read TGGL…GLSF, LASS…CSIM, LFGW…VMGW, PLWV…IFGI, VIKV…LLYI, LCYS…ILFP, IFCL…ILGL, VVVL…SAAF, IPRW…ALIG, ILGN…ILLF, FAFI…YWIG, and FGEY…GVVY.

Belongs to the purine-cytosine permease (2.A.39) family.

It is found in the membrane. Its function is as follows. Thiamine-regulated, high affinity import carrier of pyridoxine, pyridoxal and pyridoxamine. The protein is Vitamin B6 transporter TPN1 (TPN1) of Saccharomyces cerevisiae (Baker's yeast).